A 484-amino-acid chain; its full sequence is Cobyric acid synthase (484 aa).

Residues 249-438 (QLRVAVPVFT…LHGIFDRPET (190 aa)) form the GATase cobBQ-type domain. Cys-330 serves as the catalytic Nucleophile. His-430 is an active-site residue.

Belongs to the CobB/CobQ family. CobQ subfamily.

Its pathway is cofactor biosynthesis; adenosylcobalamin biosynthesis. Functionally, catalyzes amidations at positions B, D, E, and G on adenosylcobyrinic A,C-diamide. NH(2) groups are provided by glutamine, and one molecule of ATP is hydrogenolyzed for each amidation. This Vibrio cholerae serotype O1 (strain ATCC 39541 / Classical Ogawa 395 / O395) protein is Cobyric acid synthase.